A 490-amino-acid polypeptide reads, in one-letter code: Glutamate--tRNA ligase (490 aa).

The 'HIGH' region signature appears at 10-20 (PSPTGSLHIGG). The 'KMSKS' region signature appears at 251 to 255 (KLSKR). Lysine 254 lines the ATP pocket.

This sequence belongs to the class-I aminoacyl-tRNA synthetase family. Glutamate--tRNA ligase type 1 subfamily. Monomer.

The protein resides in the cytoplasm. It catalyses the reaction tRNA(Glu) + L-glutamate + ATP = L-glutamyl-tRNA(Glu) + AMP + diphosphate. In terms of biological role, catalyzes the attachment of glutamate to tRNA(Glu) in a two-step reaction: glutamate is first activated by ATP to form Glu-AMP and then transferred to the acceptor end of tRNA(Glu). This is Glutamate--tRNA ligase from Moorella thermoacetica (strain ATCC 39073 / JCM 9320).